A 213-amino-acid polypeptide reads, in one-letter code: Uridine kinase (213 aa).

Residue 15–22 (GASASGKS) coordinates ATP.

It belongs to the uridine kinase family.

It localises to the cytoplasm. It carries out the reaction uridine + ATP = UMP + ADP + H(+). The catalysed reaction is cytidine + ATP = CMP + ADP + H(+). The protein operates within pyrimidine metabolism; CTP biosynthesis via salvage pathway; CTP from cytidine: step 1/3. It participates in pyrimidine metabolism; UMP biosynthesis via salvage pathway; UMP from uridine: step 1/1. The chain is Uridine kinase from Sodalis glossinidius (strain morsitans).